Reading from the N-terminus, the 426-residue chain is Histone-binding protein RBBP7 (426 aa).

WD repeat units follow at residues 47-123 (QWLP…KINH), 129-174 (RARY…LRLR), 182-218 (GLSW…KIVD), 229-270 (VVED…HSVD), 276-313 (VNCL…LHSF), 319-370 (EIFQ…LFIH), and 377-404 (ISDF…VWQM).

This sequence belongs to the WD repeat RBAP46/RBAP48/MSI1 family. Binds directly to helix 1 of the histone fold of histone H4, a region that is not accessible when H4 is in chromatin.

The protein localises to the nucleus. Core histone-binding subunit that may target chromatin remodeling factors, histone acetyltransferases and histone deacetylases to their histone substrates in a manner that is regulated by nucleosomal DNA. Component of several complexes which regulate chromatin metabolism. The sequence is that of Histone-binding protein RBBP7 (rbbp7) from Danio rerio (Zebrafish).